A 146-amino-acid polypeptide reads, in one-letter code: 3-hydroxyacyl-[acyl-carrier-protein] dehydratase FabZ (146 aa).

Residue H46 is part of the active site.

The protein belongs to the thioester dehydratase family. FabZ subfamily.

The protein resides in the cytoplasm. The catalysed reaction is a (3R)-hydroxyacyl-[ACP] = a (2E)-enoyl-[ACP] + H2O. Its function is as follows. Involved in unsaturated fatty acids biosynthesis. Catalyzes the dehydration of short chain beta-hydroxyacyl-ACPs and long chain saturated and unsaturated beta-hydroxyacyl-ACPs. The protein is 3-hydroxyacyl-[acyl-carrier-protein] dehydratase FabZ of Acinetobacter baumannii (strain ATCC 17978 / DSM 105126 / CIP 53.77 / LMG 1025 / NCDC KC755 / 5377).